The sequence spans 759 residues: MELSSLIVPNNKKHFVVVFIGLVLIFKIALITAANEKSQIYTVHLGERQHDDPNIVTESHHDILGPLLGSKKASHESMIYSYRHGFSGFAAKLTSSQARELSGHPDVVRVTRSKNMKLKTTRVSDYLGLTSAAPTGLLHETDMGSEAIVGILDSGIWPDSKSFNDNGLGPIPTRWKGKCVSAEAFNASSCNRKLIGAMYYSKGLESKYNGSFNAAEKGEVMSPLDKIGHGTHCASTAVGSFVPDANVLSLAQGTARGSAPRARIASYKVCWNNEECFTPDIVKAIDHAIRDGVDVLSLSLGSEVPVDFEVDRDDFAIAAFHAVMKGIPVVCAGGNDGPEKETISNVAPWLITVAATTMDREYFTPITLGNNITLLGQEGLYIGEEVGFTDLLFYDDVTREDMEAGKATGKILLFFQRANFEDDFAAYAKSKGAVGVIIATQPTDSIDASTVDIAIAYVDNELGMDILLYIQTTKSPIAKISPTKTFVGRPLATKVARFSSRGPNSLSPVILKPDIAAPGSGILAAVPTGGGYDFMSGTSMSTPVVSGIVALLRKKRPDWSPAAIRSALVTTALQTDPSGEPIAAEGSPRKLADPFDYGGGLVNPVKVADPGLVYDMGHDEYVHYLCSAGYDNTSISKLLGEIYTCPTPIPSMLDVNMPSITIPYLSEEITITRTVTNVGPVGSVYKAVIQAPQGINLQVSPETLEFGSNTNKTTFTVKVSTTHRANTDYLFGSLTWADNEGHNVRIPLSVRTRVFNFKI.

Residues 1–33 form the signal peptide; it reads MELSSLIVPNNKKHFVVVFIGLVLIFKIALITA. Positions 34-119 are cleaved as a propeptide — activation peptide; sequence ANEKSQIYTV…VTRSKNMKLK (86 aa). In terms of domain architecture, Inhibitor I9 spans 41-118; sequence YTVHLGERQH…RVTRSKNMKL (78 aa). Residues 124–608 form the Peptidase S8 domain; it reads SDYLGLTSAA…GGLVNPVKVA (485 aa). The active-site Charge relay system is Asp-153. Asn-186 and Asn-209 each carry an N-linked (GlcNAc...) asparagine glycan. Catalysis depends on His-229, which acts as the Charge relay system. Asn-371 carries N-linked (GlcNAc...) asparagine glycosylation. Catalysis depends on Ser-539, which acts as the Charge relay system. N-linked (GlcNAc...) asparagine glycosylation is found at Asn-632 and Asn-711.

The protein belongs to the peptidase S8 family.

It localises to the secreted. In Arabidopsis thaliana (Mouse-ear cress), this protein is Subtilisin-like protease SBT3.16.